The chain runs to 310 residues: ADP-L-glycero-D-manno-heptose-6-epimerase (310 aa).

Residues 10–11, 31–32, K38, K53, 75–79, and N92 each bind NADP(+); these read FI, DN, and EGACS. The Proton acceptor role is filled by Y140. An NADP(+)-binding site is contributed by K144. N169 is a substrate binding site. NADP(+)-binding residues include V170 and K178. The active-site Proton acceptor is K178. Substrate-binding positions include S180, H187, 201-204, and R209; that span reads FEGS. Position 267 is an N6-acetyllysine (K267). Y272 lines the substrate pocket.

This sequence belongs to the NAD(P)-dependent epimerase/dehydratase family. HldD subfamily. In terms of assembly, homopentamer. It depends on NADP(+) as a cofactor.

It catalyses the reaction ADP-D-glycero-beta-D-manno-heptose = ADP-L-glycero-beta-D-manno-heptose. The protein operates within nucleotide-sugar biosynthesis; ADP-L-glycero-beta-D-manno-heptose biosynthesis; ADP-L-glycero-beta-D-manno-heptose from D-glycero-beta-D-manno-heptose 7-phosphate: step 4/4. In terms of biological role, catalyzes the interconversion between ADP-D-glycero-beta-D-manno-heptose and ADP-L-glycero-beta-D-manno-heptose via an epimerization at carbon 6 of the heptose. The protein is ADP-L-glycero-D-manno-heptose-6-epimerase of Shigella boydii serotype 18 (strain CDC 3083-94 / BS512).